Reading from the N-terminus, the 181-residue chain is Adenine phosphoribosyltransferase (181 aa).

This sequence belongs to the purine/pyrimidine phosphoribosyltransferase family. As to quaternary structure, homodimer.

Its subcellular location is the cytoplasm. The catalysed reaction is AMP + diphosphate = 5-phospho-alpha-D-ribose 1-diphosphate + adenine. The protein operates within purine metabolism; AMP biosynthesis via salvage pathway; AMP from adenine: step 1/1. Catalyzes a salvage reaction resulting in the formation of AMP, that is energically less costly than de novo synthesis. In Rhodopseudomonas palustris (strain BisB5), this protein is Adenine phosphoribosyltransferase.